The following is a 315-amino-acid chain: Small ribosomal subunit biogenesis GTPase RsgA (315 aa).

The CP-type G domain occupies 80-241; that stretch reads LSKQTHIIAS…IIDTPGIKGF (162 aa). GTP-binding positions include 129–132 and 183–191; these read NKVD and GHSGTGKST. Residues Cys265, Cys270, His272, and Cys278 each coordinate Zn(2+).

Belongs to the TRAFAC class YlqF/YawG GTPase family. RsgA subfamily. Monomer. Associates with 30S ribosomal subunit, binds 16S rRNA. The cofactor is Zn(2+).

It localises to the cytoplasm. Functionally, one of several proteins that assist in the late maturation steps of the functional core of the 30S ribosomal subunit. Helps release RbfA from mature subunits. May play a role in the assembly of ribosomal proteins into the subunit. Circularly permuted GTPase that catalyzes slow GTP hydrolysis, GTPase activity is stimulated by the 30S ribosomal subunit. This chain is Small ribosomal subunit biogenesis GTPase RsgA, found in Christiangramia forsetii (strain DSM 17595 / CGMCC 1.15422 / KT0803) (Gramella forsetii).